Consider the following 351-residue polypeptide: Nicotinate-nucleotide--dimethylbenzimidazole phosphoribosyltransferase (351 aa).

Catalysis depends on E318, which acts as the Proton acceptor.

It belongs to the CobT family.

The catalysed reaction is 5,6-dimethylbenzimidazole + nicotinate beta-D-ribonucleotide = alpha-ribazole 5'-phosphate + nicotinate + H(+). Its pathway is nucleoside biosynthesis; alpha-ribazole biosynthesis; alpha-ribazole from 5,6-dimethylbenzimidazole: step 1/2. Catalyzes the synthesis of alpha-ribazole-5'-phosphate from nicotinate mononucleotide (NAMN) and 5,6-dimethylbenzimidazole (DMB). This chain is Nicotinate-nucleotide--dimethylbenzimidazole phosphoribosyltransferase, found in Chloroflexus aurantiacus (strain ATCC 29366 / DSM 635 / J-10-fl).